The primary structure comprises 209 residues: CASP-like protein 1A1 (209 aa).

The disordered stretch occupies residues 1 to 26 (MEEAKHNEAEEAQGIEAREAKQIEAG). Residues 1-49 (MEEAKHNEAEEAQGIEAREAKQIEAGETSRSSRKLITFEPKLVINKGIS) are Cytoplasmic-facing. The helical transmembrane segment at 50–70 (VLGFVLRLFAVFGTIGSALAM) threads the bilayer. Topologically, residues 71–95 (GTTHESVVSLSQLVLLKVKYSDLPT) are extracellular. A helical transmembrane segment spans residues 96-116 (LMFFVVANAISGGYLVLSLPV). At 117–130 (SIFHIFSTQAKTSR) the chain is on the cytoplasmic side. The helical transmembrane segment at 131-151 (IILLVVDTVMLALVSSGASAA) threads the bilayer. At 152-183 (TATVYLAHEGNTTANWPPICQQFDGFCERISG) the chain is on the extracellular side. N162 carries N-linked (GlcNAc...) asparagine glycosylation. The helical transmembrane segment at 184–204 (SLIGSFCAVILLMLIVINSAI) threads the bilayer. Residues 205 to 209 (SLSRH) lie on the Cytoplasmic side of the membrane.

It belongs to the Casparian strip membrane proteins (CASP) family. Homodimer and heterodimers. In terms of tissue distribution, expressed in the root endodermis.

The protein resides in the cell membrane. This is CASP-like protein 1A1 from Arabidopsis thaliana (Mouse-ear cress).